The sequence spans 81 residues: Photosystem I iron-sulfur center (81 aa).

2 4Fe-4S ferredoxin-type domains span residues 2-31 (AHSV…MVPW) and 39-68 (IASA…VRVY). Positions 11, 14, 17, 21, 48, 51, 54, and 58 each coordinate [4Fe-4S] cluster.

The eukaryotic PSI reaction center is composed of at least 11 subunits. [4Fe-4S] cluster is required as a cofactor.

It localises to the plastid. The protein resides in the chloroplast thylakoid membrane. It carries out the reaction reduced [plastocyanin] + hnu + oxidized [2Fe-2S]-[ferredoxin] = oxidized [plastocyanin] + reduced [2Fe-2S]-[ferredoxin]. Functionally, apoprotein for the two 4Fe-4S centers FA and FB of photosystem I (PSI); essential for photochemical activity. FB is the terminal electron acceptor of PSI, donating electrons to ferredoxin. The C-terminus interacts with PsaA/B/D and helps assemble the protein into the PSI complex. Required for binding of PsaD and PsaE to PSI. PSI is a plastocyanin-ferredoxin oxidoreductase, converting photonic excitation into a charge separation, which transfers an electron from the donor P700 chlorophyll pair to the spectroscopically characterized acceptors A0, A1, FX, FA and FB in turn. The sequence is that of Photosystem I iron-sulfur center from Physcomitrium patens (Spreading-leaved earth moss).